We begin with the raw amino-acid sequence, 349 residues long: Phosphoribosylformylglycinamidine cyclo-ligase (349 aa).

The protein belongs to the AIR synthase family.

It is found in the cytoplasm. The catalysed reaction is 2-formamido-N(1)-(5-O-phospho-beta-D-ribosyl)acetamidine + ATP = 5-amino-1-(5-phospho-beta-D-ribosyl)imidazole + ADP + phosphate + H(+). It participates in purine metabolism; IMP biosynthesis via de novo pathway; 5-amino-1-(5-phospho-D-ribosyl)imidazole from N(2)-formyl-N(1)-(5-phospho-D-ribosyl)glycinamide: step 2/2. The sequence is that of Phosphoribosylformylglycinamidine cyclo-ligase from Bordetella petrii (strain ATCC BAA-461 / DSM 12804 / CCUG 43448).